The primary structure comprises 367 residues: 2-aminoethylphosphonate--pyruvate transaminase (367 aa).

The residue at position 193 (Lys-193) is an N6-(pyridoxal phosphate)lysine.

It belongs to the class-V pyridoxal-phosphate-dependent aminotransferase family. PhnW subfamily. In terms of assembly, homodimer. Pyridoxal 5'-phosphate serves as cofactor.

It carries out the reaction (2-aminoethyl)phosphonate + pyruvate = phosphonoacetaldehyde + L-alanine. Its function is as follows. Involved in phosphonate degradation. The chain is 2-aminoethylphosphonate--pyruvate transaminase from Vibrio parahaemolyticus serotype O3:K6 (strain RIMD 2210633).